A 118-amino-acid polypeptide reads, in one-letter code: UPF0344 protein YisL (118 aa).

Helical transmembrane passes span 4–24 (LHIT…SLYS), 33–53 (ITHM…AELF), 62–82 (EYAG…MLLI), and 93–113 (LWVG…HLPI).

Belongs to the UPF0344 family.

The protein resides in the cell membrane. In Bacillus subtilis (strain 168), this protein is UPF0344 protein YisL (yisL).